We begin with the raw amino-acid sequence, 98 residues long: MPVVYVNIFLAFIVSLMGLLIYRSHLMSSLLCLEGMMLSLFVMLTVTVLNNHFTLANMAPIILLVFAACEAALGLSLLVMVSNTYGTDYVQNLNLLQC.

Helical transmembrane passes span 1–21 (MPVV…GLLI), 29–49 (SLLC…VTVL), and 61–81 (IILL…LVMV).

It belongs to the complex I subunit 4L family. Core subunit of respiratory chain NADH dehydrogenase (Complex I) which is composed of 45 different subunits.

Its subcellular location is the mitochondrion inner membrane. It carries out the reaction a ubiquinone + NADH + 5 H(+)(in) = a ubiquinol + NAD(+) + 4 H(+)(out). Core subunit of the mitochondrial membrane respiratory chain NADH dehydrogenase (Complex I) which catalyzes electron transfer from NADH through the respiratory chain, using ubiquinone as an electron acceptor. Part of the enzyme membrane arm which is embedded in the lipid bilayer and involved in proton translocation. The protein is NADH-ubiquinone oxidoreductase chain 4L (MT-ND4L) of Ursus americanus (American black bear).